Consider the following 276-residue polypeptide: Tyrosinase (276 aa).

Positions 38, 56, 66, 193, 197, and 219 each coordinate Cu cation.

The protein belongs to the tyrosinase family. Requires Cu(2+) as cofactor.

It catalyses the reaction 2 L-dopa + O2 = 2 L-dopaquinone + 2 H2O. It carries out the reaction L-tyrosine + O2 = L-dopaquinone + H2O. In terms of biological role, this is a copper-containing oxidase that functions in the formation of pigments such as melanins and other polyphenolic compounds. The sequence is that of Tyrosinase (melC2) from Streptomyces galbus.